A 225-amino-acid chain; its full sequence is NAD(P)H-quinone oxidoreductase subunit K, chloroplastic (225 aa).

Cysteine 43, cysteine 44, cysteine 108, and cysteine 139 together coordinate [4Fe-4S] cluster.

It belongs to the complex I 20 kDa subunit family. As to quaternary structure, NDH is composed of at least 16 different subunits, 5 of which are encoded in the nucleus. The cofactor is [4Fe-4S] cluster.

The protein resides in the plastid. It localises to the chloroplast thylakoid membrane. The enzyme catalyses a plastoquinone + NADH + (n+1) H(+)(in) = a plastoquinol + NAD(+) + n H(+)(out). The catalysed reaction is a plastoquinone + NADPH + (n+1) H(+)(in) = a plastoquinol + NADP(+) + n H(+)(out). Its function is as follows. NDH shuttles electrons from NAD(P)H:plastoquinone, via FMN and iron-sulfur (Fe-S) centers, to quinones in the photosynthetic chain and possibly in a chloroplast respiratory chain. The immediate electron acceptor for the enzyme in this species is believed to be plastoquinone. Couples the redox reaction to proton translocation, and thus conserves the redox energy in a proton gradient. In Illicium oligandrum (Star anise), this protein is NAD(P)H-quinone oxidoreductase subunit K, chloroplastic.